The sequence spans 257 residues: 1-(5-phosphoribosyl)-5-[(5-phosphoribosylamino)methylideneamino] imidazole-4-carboxamide isomerase (257 aa).

The active-site Proton acceptor is Asp-8. Asp-129 serves as the catalytic Proton donor.

It belongs to the HisA/HisF family.

The protein localises to the cytoplasm. The enzyme catalyses 1-(5-phospho-beta-D-ribosyl)-5-[(5-phospho-beta-D-ribosylamino)methylideneamino]imidazole-4-carboxamide = 5-[(5-phospho-1-deoxy-D-ribulos-1-ylimino)methylamino]-1-(5-phospho-beta-D-ribosyl)imidazole-4-carboxamide. It participates in amino-acid biosynthesis; L-histidine biosynthesis; L-histidine from 5-phospho-alpha-D-ribose 1-diphosphate: step 4/9. The polypeptide is 1-(5-phosphoribosyl)-5-[(5-phosphoribosylamino)methylideneamino] imidazole-4-carboxamide isomerase (Trichormus variabilis (strain ATCC 29413 / PCC 7937) (Anabaena variabilis)).